A 126-amino-acid polypeptide reads, in one-letter code: Antimicrobial protein 1 (126 aa).

Positions 1 to 24 are cleaved as a signal peptide; sequence MRSSLLLGLTVVLLLGVTVPPCMA.

In terms of tissue distribution, strongly expressed in gills, hemocytes and reproductive tract, with weaker expression in muscle, heart and digestive tract. Not detected in eyes and hepatopancreas (at protein level).

Its subcellular location is the secreted. In terms of biological role, has antibacterial activity against the Gram-positive bacteria E.coli (MIC&lt;50 ug/ml) and P.aeruginosa (MIC&lt;25 ug/ml), and the Gram-negative bacteria S.aureus (MIC&lt;100 ug/ml) and S.pyogenes (MIC&lt;50 ug/ml). This is Antimicrobial protein 1 from Scylla serrata (Mud crab).